A 324-amino-acid chain; its full sequence is Probable RuBisCO transcriptional regulator (324 aa).

In terms of domain architecture, HTH lysR-type spans 8-65 (FSLEQLRILKAIATEGSFKKAAESLYMTQPAISLQIQTLEKKLNIALFDRSGRRALMT). Residues 25–44 (FKKAAESLYMTQPAISLQIQ) constitute a DNA-binding region (H-T-H motif).

This sequence belongs to the LysR transcriptional regulatory family.

Its subcellular location is the plastid. It localises to the cyanelle. Trans-acting transcriptional regulator of RuBisCO genes (rbcL and rbcS) expression. The chain is Probable RuBisCO transcriptional regulator (rbcR) from Cyanophora paradoxa.